Here is a 129-residue protein sequence, read N- to C-terminus: MAKTATKVRKKIKKNVAEGIAHVHASFNNTIITITDRQGNALSWATSGGAGFKGSRKSTPFAAQVAAEAAGKVAQECGVKNLEVRIKGPGPGRESAVRALNALGMKISSITDITPIPHNGCRPPKKRRI.

The protein belongs to the universal ribosomal protein uS11 family. As to quaternary structure, part of the 30S ribosomal subunit. Interacts with proteins S7 and S18. Binds to IF-3.

In terms of biological role, located on the platform of the 30S subunit, it bridges several disparate RNA helices of the 16S rRNA. Forms part of the Shine-Dalgarno cleft in the 70S ribosome. The polypeptide is Small ribosomal subunit protein uS11 (Azoarcus sp. (strain BH72)).